The primary structure comprises 156 residues: MNATKAPGGIKPKHQRLVLLVIALVALIGAGLLAAYALSNQASYFYVPNDLVKNPPEQGRAIRLGGMVQKGSLKTRADGITIDFVVGDGKARVPVRYTGITPDLFVEGSGVVAEGRMEGQTFVADNLLAKHDENYVPRQMGDMTKAQAEAVVAETK.

Residues 1–16 (MNATKAPGGIKPKHQR) lie on the Cytoplasmic side of the membrane. Residues 17–37 (LVLLVIALVALIGAGLLAAYA) form a helical; Signal-anchor for type II membrane protein membrane-spanning segment. Residues 38-156 (LSNQASYFYV…QAEAVVAETK (119 aa)) are Periplasmic-facing. Heme contacts are provided by H131 and Y135.

This sequence belongs to the CcmE/CycJ family.

It localises to the cell inner membrane. In terms of biological role, heme chaperone required for the biogenesis of c-type cytochromes. Transiently binds heme delivered by CcmC and transfers the heme to apo-cytochromes in a process facilitated by CcmF and CcmH. In Novosphingobium aromaticivorans (strain ATCC 700278 / DSM 12444 / CCUG 56034 / CIP 105152 / NBRC 16084 / F199), this protein is Cytochrome c-type biogenesis protein CcmE.